Consider the following 574-residue polypeptide: MSTTGNIAITGIPTTAGPDGSFPLRRELRDLQRNYPDHFNLLVLALKDFQALNESVQTSYYQIAGIHGLPYKPWNNVGSNSDWQSTSGFGGYCTHSSILFLTWHRPYLALFEQALYNSIQKIANQFPQGPLRTKYVEAAKTFRMPYFDWASQPPSGSSAFPSAFTAPSLQVVDVDGKTKSTANPIYRFVFHPVNPSPGDFPRQWSRFPTTVRYPNPRTGQSQDNRVAPILANELASLRTNVSLLLLSYTNFDAFSFNRWDPNMTPGEFGSLEDVHNEIHDRTGGGGHMSSLDVSSFDPLFWFHHTNVDRLWAIWQDLNPDNFLTPRPAPYSTFNSTEGESQTKDTPLTPFWDKSATKFWTSEEIKDTTTTFGYAYPETQEWKYRTGSEYQTSIRQAVTTLYGTNVFANFAAANVQARATEHTELIKSLSLAAPPPSAPITAEKPLLITQEMKASPIPEHLQHLAPNNKYPEWVVNIRAQKHGLHGAFRVIVFLGPIDESDPDSWQTEFNTVGRVSVLGRSTQGPTTTKCAKCITDAADELMISGTVPLTSALLQDIVNENTASIACSQRKWCRI.

Residues His-67, His-95, His-104, His-275, His-279, and His-304 each coordinate Cu cation. The 2'-(S-cysteinyl)-histidine (Cys-His) cross-link spans 93 to 95 (CTH).

It belongs to the tyrosinase family. The cofactor is Cu(2+).

It catalyses the reaction 2 L-dopa + O2 = 2 L-dopaquinone + 2 H2O. The enzyme catalyses L-tyrosine + O2 = L-dopaquinone + H2O. In terms of biological role, this is a copper-containing oxidase that functions in the formation of pigments such as melanins and other polyphenolic compounds. The sequence is that of Tyrosinase (TYR) from Podospora anserina (Pleurage anserina).